The sequence spans 257 residues: tRNA pseudouridine synthase A (257 aa).

The active-site Nucleophile is the D53. Y111 is a substrate binding site.

Belongs to the tRNA pseudouridine synthase TruA family. Homodimer.

The enzyme catalyses uridine(38/39/40) in tRNA = pseudouridine(38/39/40) in tRNA. Functionally, formation of pseudouridine at positions 38, 39 and 40 in the anticodon stem and loop of transfer RNAs. In Xanthomonas axonopodis pv. citri (strain 306), this protein is tRNA pseudouridine synthase A.